Here is a 242-residue protein sequence, read N- to C-terminus: uncharacterized protein (242 aa).

Positions 3–116 (TALVIDDEQF…RLNKTVKRLN (114 aa)) constitute a Response regulatory domain. 4-aspartylphosphate is present on aspartate 54. In terms of domain architecture, HTH LytTR-type spans 139-240 (IPCIGHNRIV…LKVLKEMLGI (102 aa)).

This is an uncharacterized protein from Vibrio parahaemolyticus serotype O3:K6 (strain RIMD 2210633).